We begin with the raw amino-acid sequence, 426 residues long: Phosphomethylpyrimidine synthase (426 aa).

Residues N65, M94, Y123, H162, 184–186 (SRG), 225–228 (DGMR), and E264 each bind substrate. Zn(2+) is bound at residue H268. Substrate is bound at residue Y291. H332 contributes to the Zn(2+) binding site. [4Fe-4S] cluster-binding residues include C408, C411, and C415.

The protein belongs to the ThiC family. [4Fe-4S] cluster is required as a cofactor.

The enzyme catalyses 5-amino-1-(5-phospho-beta-D-ribosyl)imidazole + S-adenosyl-L-methionine = 4-amino-2-methyl-5-(phosphooxymethyl)pyrimidine + CO + 5'-deoxyadenosine + formate + L-methionine + 3 H(+). Its pathway is cofactor biosynthesis; thiamine diphosphate biosynthesis. Functionally, catalyzes the synthesis of the hydroxymethylpyrimidine phosphate (HMP-P) moiety of thiamine from aminoimidazole ribotide (AIR) in a radical S-adenosyl-L-methionine (SAM)-dependent reaction. This chain is Phosphomethylpyrimidine synthase, found in Methanococcus vannielii (strain ATCC 35089 / DSM 1224 / JCM 13029 / OCM 148 / SB).